The following is a 241-amino-acid chain: RAD9, HUS1, RAD1-interacting nuclear orphan protein 1 (241 aa).

Positions 1–10 (MPPRKKRRQA) are enriched in basic residues. The disordered stretch occupies residues 1–27 (MPPRKKRRQAAQKPQLLFHQQPLEAPK). The RAD1-binding motif motif lies at 56–62 (SWVSPQF). Disordered regions lie at residues 68–134 (SWFP…PLVP) and 157–204 (IPPD…LVTD). The span at 72–87 (GKRKHHHRDHARRSSR) shows a compositional bias: basic residues. A compositionally biased stretch (polar residues) spans 100–110 (ETPQSSASSAT). The short motif at 129 to 136 (GRPLVPML) is the D-box element. The KEN box signature appears at 177–181 (LRENS). Positions 181-193 (SLPSCSLHTSTPK) are enriched in polar residues.

In terms of assembly, interacts (when phosphorylated by PLK1) with POLQ; promoting POLQ recruitment to DNA damage sites. Interacts with RAD1; interaction is direct and promotes association with the 9-1-1 (RAD9-RAD1-HUS1) complex. Interacts with RAD18. Interacts with TOPBP1. Interacts with UBE2N. In terms of processing, phosphorylated by PLK1, promoting interaction with polymerase theta (POLQ). Ubiquitinated and degraded by the APC/C complex upon mitotic exit.

It is found in the nucleus. Its subcellular location is the chromosome. Functionally, involved in microhomology-mediated end-joining (MMEJ) DNA repair by promoting recruitment of polymerase theta (POLQ) to DNA damage sites during mitosis. MMEJ is an alternative non-homologous end-joining (NHEJ) machinery that takes place during mitosis to repair double-strand breaks in DNA that originate in S-phase. Accumulates in M-phase; following phosphorylation by PLK1, interacts with POLQ, enabling its recruitment to double-strand breaks for subsequent repair. Also involved in the DNA damage response (DDR) signaling in response to genotoxic stresses such as ionizing radiation (IR) during the S phase. Recruited to sites of DNA damage through interaction with the 9-1-1 cell-cycle checkpoint response complex and TOPBP1 in a ATR-dependent manner. Required for the progression of the G1 to S phase transition. Plays a role in the stimulation of CHEK1 phosphorylation. This Bos taurus (Bovine) protein is RAD9, HUS1, RAD1-interacting nuclear orphan protein 1 (RHNO1).